A 2014-amino-acid chain; its full sequence is Leucine-rich repeat serine/threonine-protein kinase 1 (2014 aa).

ANK repeat units follow at residues Gln51–Ser81, Glu86–Thr116, Thr119–Thr148, Leu152–Asn182, and Ile193–Ser222. LRR repeat units lie at residues Gln279 to Gly300, Asn303 to Asp324, Arg330 to Leu351, Lys353 to Thr374, Lys381 to Ser402, Ser405 to Pro426, Leu427 to Phe447, His451 to Leu472, Ala474 to Thr495, Gln498 to Lys519, Ser549 to Leu570, Asn572 to Leu594, and Asn596 to Glu617. A Roc domain is found at Lys632–Met826. Positions 647, 648, 650, 651, 652, 653, 670, 758, 760, 806, and 807 each coordinate GDP. Residues Gly840–Lys1237 form the COR domain. Thr1061 carries the phosphothreonine modification. Phosphoserine is present on residues Ser1064 and Ser1074. Position 1075 is a phosphothreonine (Thr1075). One can recognise a Protein kinase domain in the interval Glu1242–Phe1525. Residues Leu1248 to Val1256 and Lys1270 contribute to the ATP site. Asp1386 acts as the Proton acceptor in catalysis. WD repeat units follow at residues Ala1539–Cys1579, Met1582–Asp1622, Thr1623–Tyr1668, Val1693–Pro1729, Tyr1730–Gly1778, Asp1779–Lys1948, and Arg1950–Arg1986. Residues Pro1791 to Leu1906 are WD40 loop; involved in dimer stabilization. The disordered stretch occupies residues Ser1839 to Ser1895. Over residues Arg1853 to Ser1871 the composition is skewed to low complexity.

The protein belongs to the protein kinase superfamily. TKL Ser/Thr protein kinase family. ROCO subfamily. Homodimer. The homodimer is autoinhibited and stabilized by its N-terminal residues and ANK repeats. Interacts with CSK. It depends on Mg(2+) as a cofactor. The cofactor is Mn(2+). Post-translationally, autophosphorylated. Autophosphorylation in inhibited in its dimeric state. Phosphorylated by protein kinase C isozymes PRKCA, PRKCB, PRKCG, PRKCE, PRKCZ and PRKCT at Ser-1064, Ser-1074 and Thr-1075. Phosphorylation at these residues activates the kinase activity of LRRK1 to phosphorylate RAB7A. Expressed in osteoclasts and bone marrow stromal cells.

The protein resides in the cytoplasm. The protein localises to the cell membrane. It catalyses the reaction L-seryl-[protein] + ATP = O-phospho-L-seryl-[protein] + ADP + H(+). The enzyme catalyses L-threonyl-[protein] + ATP = O-phospho-L-threonyl-[protein] + ADP + H(+). Activated by phosphorylation by PKC. Binds both GTP and GDP; binding of GTP stimulates kinase activity. Sterically autoinhibited in its dimeric state. Serine/threonine-protein kinase which phosphorylates RAB proteins involved in intracellular trafficking. Phosphorylates RAB7A; this activity is dependent on protein kinase C (PKC) activation. Plays a role in the negative regulation of bone mass, acting through the maturation of osteoclasts. The polypeptide is Leucine-rich repeat serine/threonine-protein kinase 1 (Mus musculus (Mouse)).